We begin with the raw amino-acid sequence, 312 residues long: Ribonuclease Z (312 aa).

Zn(2+) is bound by residues H62, H64, D66, H67, H144, D215, and H273. D66 acts as the Proton acceptor in catalysis.

It belongs to the RNase Z family. In terms of assembly, homodimer. The cofactor is Zn(2+).

It carries out the reaction Endonucleolytic cleavage of RNA, removing extra 3' nucleotides from tRNA precursor, generating 3' termini of tRNAs. A 3'-hydroxy group is left at the tRNA terminus and a 5'-phosphoryl group is left at the trailer molecule.. Zinc phosphodiesterase, which displays some tRNA 3'-processing endonuclease activity. Probably involved in tRNA maturation, by removing a 3'-trailer from precursor tRNA. In Prochlorococcus marinus subsp. pastoris (strain CCMP1986 / NIES-2087 / MED4), this protein is Ribonuclease Z.